We begin with the raw amino-acid sequence, 395 residues long: Chorismate synthase (395 aa).

Position 48 (Arg-48) interacts with NADP(+). 125–127 (RSS) serves as a coordination point for FMN. The disordered stretch occupies residues 264–292 (RNEDWTFDDGESFDHVESEEGDPVPVGND). Residues Gly-298, 313-317 (HAPTS), and Arg-340 each bind FMN. Residues 373-395 (PDRVDGNPGQYDTDYHPSSPDND) form a disordered region.

The protein belongs to the chorismate synthase family. It depends on FMNH2 as a cofactor.

The catalysed reaction is 5-O-(1-carboxyvinyl)-3-phosphoshikimate = chorismate + phosphate. It participates in metabolic intermediate biosynthesis; chorismate biosynthesis; chorismate from D-erythrose 4-phosphate and phosphoenolpyruvate: step 7/7. Its function is as follows. Catalyzes the anti-1,4-elimination of the C-3 phosphate and the C-6 proR hydrogen from 5-enolpyruvylshikimate-3-phosphate (EPSP) to yield chorismate, which is the branch point compound that serves as the starting substrate for the three terminal pathways of aromatic amino acid biosynthesis. This reaction introduces a second double bond into the aromatic ring system. In Halorubrum lacusprofundi (strain ATCC 49239 / DSM 5036 / JCM 8891 / ACAM 34), this protein is Chorismate synthase.